The sequence spans 514 residues: Cilia- and flagella-associated protein 53 (514 aa).

Coiled coils occupy residues 91–148 (IINI…RQDF) and 203–474 (KLWE…REFE).

Belongs to the CFAP53 family. Microtubule inner protein component of sperm flagellar doublet microtubules. Interacts with PIERCE1 and PIERCE2; the interactions link outer dynein arms docking complex (ODA-DC) to the internal microtubule inner proteins (MIP) in cilium axoneme. Interacts with CCDC38. Interacts with CCDC42 and IFT88. Interacts with centriolar satellite proteins PIBF1/CEP90 and PCM1. Interacts with dyneins DNAIC1, DNAIC2 AND DNAH11 and with ODA-DC component ODAD4/TTC25. As to expression, expressed in skin fibroblasts (at protein level). Expressed in nasal respiratory epithelial cells (at protein level). Expressed in airway epithelial cells.

Its subcellular location is the cytoplasm. It is found in the cytoskeleton. It localises to the cilium axoneme. The protein resides in the flagellum axoneme. The protein localises to the microtubule organizing center. Its subcellular location is the centrosome. It is found in the centriole. It localises to the centriolar satellite. The protein resides in the spindle pole. The protein localises to the cell projection. Its subcellular location is the cilium. Its function is as follows. Microtubule inner protein (MIP) part of the dynein-decorated doublet microtubules (DMTs) in cilia axoneme, which is required for motile cilia beating. Regulates motility patterns of both 9+0 and 9+2 motile cilia through differential localization and recruitment of axonemal dynein components. Required for centriolar satellite integrity and non-motile cilium assembly. Required for motile cilium formation. Through its role in the beating of primary cilia, involved in the establishment of organ laterality during embryogenesis. Required for sperm flagellum biogenesis and is essential for male fertility. The chain is Cilia- and flagella-associated protein 53 from Homo sapiens (Human).